A 283-amino-acid chain; its full sequence is Formamidopyrimidine-DNA glycosylase (283 aa).

Proline 2 acts as the Schiff-base intermediate with DNA in catalysis. The active-site Proton donor is glutamate 3. The Proton donor; for beta-elimination activity role is filled by lysine 60. DNA-binding residues include histidine 100, arginine 119, and arginine 164. The FPG-type zinc-finger motif lies at 249–283 (WVYNRAGEPCKVCGDVIQRIKLGGRSSHFCRQCQV). Residue arginine 273 is the Proton donor; for delta-elimination activity of the active site.

It belongs to the FPG family. In terms of assembly, monomer. Zn(2+) is required as a cofactor.

The enzyme catalyses Hydrolysis of DNA containing ring-opened 7-methylguanine residues, releasing 2,6-diamino-4-hydroxy-5-(N-methyl)formamidopyrimidine.. It carries out the reaction 2'-deoxyribonucleotide-(2'-deoxyribose 5'-phosphate)-2'-deoxyribonucleotide-DNA = a 3'-end 2'-deoxyribonucleotide-(2,3-dehydro-2,3-deoxyribose 5'-phosphate)-DNA + a 5'-end 5'-phospho-2'-deoxyribonucleoside-DNA + H(+). Its function is as follows. Involved in base excision repair of DNA damaged by oxidation or by mutagenic agents. Acts as a DNA glycosylase that recognizes and removes damaged bases. Has a preference for oxidized purines, such as 7,8-dihydro-8-oxoguanine (8-oxoG). Has AP (apurinic/apyrimidinic) lyase activity and introduces nicks in the DNA strand. Cleaves the DNA backbone by beta-delta elimination to generate a single-strand break at the site of the removed base with both 3'- and 5'-phosphates. This Nostoc sp. (strain PCC 7120 / SAG 25.82 / UTEX 2576) protein is Formamidopyrimidine-DNA glycosylase.